Reading from the N-terminus, the 323-residue chain is Caspase-1 (323 aa).

The propeptide occupies 1 to 33; that stretch reads MTDECVTRNYGVGIRSPNGSENRGSFIMADNTD. Residues H154 and C196 contribute to the active site. A propeptide spanning residues 203–215 is cleaved from the precursor; it reads GGITLEKGVTETD.

The protein belongs to the peptidase C14A family. As to quaternary structure, heterotetramer that consists of two anti-parallel arranged heterodimers, each one formed by a 22 kDa (p22) and a 13 kDa (p13) subunit.

Its function is as follows. Involved in the activation cascade of caspases responsible for apoptosis execution. Proteolytically cleaves poly(ADP-ribose) polymerase (PARP). Loss of zygotic DCP-1 function causes larval lethality and melanotic tumors. The sequence is that of Caspase-1 (Dcp-1) from Drosophila melanogaster (Fruit fly).